The following is a 290-amino-acid chain: GTPase Era (290 aa).

An Era-type G domain is found at lysine 2–glutamate 169. The segment at glycine 10–serine 17 is G1. Glycine 10–serine 17 provides a ligand contact to GTP. Residues glutamine 36–asparagine 40 are G2. The interval aspartate 57–glycine 60 is G3. GTP-binding positions include aspartate 57–phenylalanine 61 and asparagine 119–aspartate 122. Positions asparagine 119–aspartate 122 are G4. The tract at residues isoleucine 148–alanine 150 is G5. Residues leucine 200–lysine 276 form the KH type-2 domain.

Belongs to the TRAFAC class TrmE-Era-EngA-EngB-Septin-like GTPase superfamily. Era GTPase family. As to quaternary structure, monomer.

The protein resides in the cytoplasm. It localises to the cell inner membrane. In terms of biological role, an essential GTPase that binds both GDP and GTP, with rapid nucleotide exchange. Plays a role in 16S rRNA processing and 30S ribosomal subunit biogenesis and possibly also in cell cycle regulation and energy metabolism. The chain is GTPase Era from Borrelia hermsii (strain HS1 / DAH).